A 280-amino-acid chain; its full sequence is Hydroxyethylthiazole kinase (280 aa).

Residue Met58 participates in substrate binding. ATP is bound at residue Arg129. A substrate-binding site is contributed by Ala206.

It belongs to the Thz kinase family. Mg(2+) is required as a cofactor.

The enzyme catalyses 5-(2-hydroxyethyl)-4-methylthiazole + ATP = 4-methyl-5-(2-phosphooxyethyl)-thiazole + ADP + H(+). Its pathway is cofactor biosynthesis; thiamine diphosphate biosynthesis; 4-methyl-5-(2-phosphoethyl)-thiazole from 5-(2-hydroxyethyl)-4-methylthiazole: step 1/1. Thiazole kinase involved in thiamine salvage pathway. The polypeptide is Hydroxyethylthiazole kinase (THIM) (Zea mays (Maize)).